The chain runs to 350 residues: Ion-translocating oxidoreductase complex subunit D (350 aa).

The next 4 helical transmembrane spans lie at 20-40 (IMLL…WFFG), 42-62 (GTVL…AAIL), 89-109 (IPPL…VVIA), and 123-143 (PAMI…TSWL). Threonine 187 carries the FMN phosphoryl threonine modification. Transmembrane regions (helical) follow at residues 214-234 (VLAG…GLFL), 242-262 (WHIP…GWLF), 267-287 (LASP…FFIL), 301-321 (LIFG…GGYP), and 322-342 (DGVA…DYYT).

The protein belongs to the NqrB/RnfD family. The complex is composed of six subunits: RnfA, RnfB, RnfC, RnfD, RnfE and RnfG. The cofactor is FMN.

The protein resides in the cell inner membrane. Part of a membrane-bound complex that couples electron transfer with translocation of ions across the membrane. In Klebsiella pneumoniae (strain 342), this protein is Ion-translocating oxidoreductase complex subunit D.